The following is a 172-amino-acid chain: Protein GrpE (172 aa).

This sequence belongs to the GrpE family. Homodimer.

Its subcellular location is the cytoplasm. Its function is as follows. Participates actively in the response to hyperosmotic and heat shock by preventing the aggregation of stress-denatured proteins, in association with DnaK and GrpE. It is the nucleotide exchange factor for DnaK and may function as a thermosensor. Unfolded proteins bind initially to DnaJ; upon interaction with the DnaJ-bound protein, DnaK hydrolyzes its bound ATP, resulting in the formation of a stable complex. GrpE releases ADP from DnaK; ATP binding to DnaK triggers the release of the substrate protein, thus completing the reaction cycle. Several rounds of ATP-dependent interactions between DnaJ, DnaK and GrpE are required for fully efficient folding. The sequence is that of Protein GrpE from Thermotoga maritima (strain ATCC 43589 / DSM 3109 / JCM 10099 / NBRC 100826 / MSB8).